The chain runs to 259 residues: Bidirectional sugar transporter SWEET4 (259 aa).

Over 1–10 (MVSPDTIRTA) the chain is Extracellular. A MtN3/slv 1 domain is found at 10–94 (AIGVVGNGTA…TYIALFLAFS (85 aa)). A helical membrane pass occupies residues 11-31 (IGVVGNGTALVLFLSPVPTFI). The Cytoplasmic segment spans residues 32–44 (RIWKKGSVEQYSA). A helical membrane pass occupies residues 45-65 (VPYVATLLNCMMWVLYGLPAV). Residues 66-77 (HPHSMLVITING) lie on the Extracellular side of the membrane. N-linked (GlcNAc...) asparagine glycosylation is present at asparagine 76. A helical transmembrane segment spans residues 78-98 (TGMAIELTYIALFLAFSLGAV). At 99–101 (RRR) the chain is on the cytoplasmic side. Residues 102 to 122 (VLLLLAAEVAFVAAVAALVLN) form a helical membrane-spanning segment. Topologically, residues 123-131 (LAHTHERRS) are extracellular. A helical transmembrane segment spans residues 132–152 (MIVGILCVLFGTGMYAAPLSV). The region spanning 133-217 (IVGILCVLFG…ILYAIYYKST (85 aa)) is the MtN3/slv 2 domain. The Cytoplasmic segment spans residues 153-165 (MKMVIQTKSVEYM). A helical membrane pass occupies residues 166–186 (PLFLSLASLVNGICWTAYALI). Residues 187-191 (RFDLY) lie on the Extracellular side of the membrane. The chain crosses the membrane as a helical span at residues 192 to 212 (ITIPNGLGVMFAVAQLILYAI). Residues 213 to 259 (YYKSTQQIIEARKRKEADHVAMTDVVVDSAKNNPSSGAAAAAANGRY) are Cytoplasmic-facing.

Belongs to the SWEET sugar transporter family. In terms of assembly, forms homooligomers and/or heterooligomers.

It is found in the cell membrane. In terms of biological role, mediates both low-affinity uptake and efflux of sugar across the plasma membrane. In Oryza sativa subsp. indica (Rice), this protein is Bidirectional sugar transporter SWEET4 (SWEET4).